Reading from the N-terminus, the 206-residue chain is ATP-dependent dethiobiotin synthetase BioD (206 aa).

An ATP-binding site is contributed by 12-17; sequence DSGKTL. Residue T16 coordinates Mg(2+). The active site involves K32. A Mg(2+)-binding site is contributed by E99. Position 99-102 (99-102) interacts with ATP; that stretch reads EGAG.

This sequence belongs to the dethiobiotin synthetase family. Homodimer. Mg(2+) is required as a cofactor.

It is found in the cytoplasm. It catalyses the reaction (7R,8S)-7,8-diammoniononanoate + CO2 + ATP = (4R,5S)-dethiobiotin + ADP + phosphate + 3 H(+). Its pathway is cofactor biosynthesis; biotin biosynthesis; biotin from 7,8-diaminononanoate: step 1/2. Functionally, catalyzes a mechanistically unusual reaction, the ATP-dependent insertion of CO2 between the N7 and N8 nitrogen atoms of 7,8-diaminopelargonic acid (DAPA, also called 7,8-diammoniononanoate) to form a ureido ring. The chain is ATP-dependent dethiobiotin synthetase BioD from Cytophaga hutchinsonii (strain ATCC 33406 / DSM 1761 / CIP 103989 / NBRC 15051 / NCIMB 9469 / D465).